The following is a 424-amino-acid chain: Glutamyl-tRNA reductase (424 aa).

Substrate-binding positions include 49-52 (TCNR), serine 108, 113-115 (EPQ), and glutamine 119. The Nucleophile role is filled by cysteine 50. 188–193 (GAGETI) is an NADP(+) binding site.

It belongs to the glutamyl-tRNA reductase family. As to quaternary structure, homodimer.

It carries out the reaction (S)-4-amino-5-oxopentanoate + tRNA(Glu) + NADP(+) = L-glutamyl-tRNA(Glu) + NADPH + H(+). It functions in the pathway porphyrin-containing compound metabolism; protoporphyrin-IX biosynthesis; 5-aminolevulinate from L-glutamyl-tRNA(Glu): step 1/2. Catalyzes the NADPH-dependent reduction of glutamyl-tRNA(Glu) to glutamate 1-semialdehyde (GSA). The chain is Glutamyl-tRNA reductase from Hahella chejuensis (strain KCTC 2396).